The sequence spans 1024 residues: Beta-galactosidase (1024 aa).

Residues asparagine 103 and aspartate 202 each contribute to the substrate site. Aspartate 202 contributes to the Na(+) binding site. Mg(2+) contacts are provided by glutamate 417, histidine 419, and glutamate 462. Substrate contacts are provided by residues glutamate 462 and glutamate 538–histidine 541. Glutamate 462 (proton donor) is an active-site residue. Glutamate 538 serves as the catalytic Nucleophile. Asparagine 598 is a Mg(2+) binding site. 2 residues coordinate Na(+): phenylalanine 602 and asparagine 605. 2 residues coordinate substrate: asparagine 605 and tryptophan 1000.

It belongs to the glycosyl hydrolase 2 family. As to quaternary structure, homotetramer. The cofactor is Mg(2+). Na(+) serves as cofactor.

The catalysed reaction is Hydrolysis of terminal non-reducing beta-D-galactose residues in beta-D-galactosides.. This Shigella dysenteriae serotype 1 (strain Sd197) protein is Beta-galactosidase.